A 255-amino-acid chain; its full sequence is MFIGIVSLFPEMFRAITDYGVTGRAVKKGLLNIQSWSPRDFAHDRHRTVDDRPYGGGPGMLMMVQPLRDAIHAAKAAAGEGAKVIYLSPQGRKLDQAGVSELATNQKLILVCGRYEGVDERVIQTEIDEEWSIGDYVLSGGELPAMTLIDSVARFIPGVLGHEASAIEDSFADGLLDCPHYTRPEVLEGMEVPPVLLSGNHAEIRRWRLKQSLGRTWLRRPELLENLALTEEQARLLAEFKTEHAQQQHKHDGMA.

Residues Gly-113 and 133 to 138 (IGDYVL) contribute to the S-adenosyl-L-methionine site.

It belongs to the RNA methyltransferase TrmD family. In terms of assembly, homodimer.

Its subcellular location is the cytoplasm. The enzyme catalyses guanosine(37) in tRNA + S-adenosyl-L-methionine = N(1)-methylguanosine(37) in tRNA + S-adenosyl-L-homocysteine + H(+). Its function is as follows. Specifically methylates guanosine-37 in various tRNAs. The sequence is that of tRNA (guanine-N(1)-)-methyltransferase from Salmonella agona (strain SL483).